Here is a 146-residue protein sequence, read N- to C-terminus: Hemoglobin subunit beta (146 aa).

The residue at position 1 (Val1) is an N-acetylvaline. A Globin domain is found at 2-146 (HLTGEEKSAV…VANALAHKYH (145 aa)). The residue at position 12 (Thr12) is a Phosphothreonine. The residue at position 44 (Ser44) is a Phosphoserine. Position 59 is an N6-acetyllysine (Lys59). Position 63 (His63) interacts with heme b. N6-acetyllysine is present on Lys82. Position 92 (His92) interacts with heme b. An S-nitrosocysteine modification is found at Cys93. Lys144 carries the N6-acetyllysine modification.

This sequence belongs to the globin family. As to quaternary structure, heterotetramer of two alpha chains and two beta chains. As to expression, red blood cells.

In terms of biological role, involved in oxygen transport from the lung to the various peripheral tissues. The polypeptide is Hemoglobin subunit beta (HBB) (Loris tardigradus (Slender loris)).